A 159-amino-acid polypeptide reads, in one-letter code: Ribosomal RNA large subunit methyltransferase H (159 aa).

S-adenosyl-L-methionine is bound by residues L76, G108, and 127-132; that span reads FSKMTF.

The protein belongs to the RNA methyltransferase RlmH family. As to quaternary structure, homodimer.

The protein localises to the cytoplasm. It carries out the reaction pseudouridine(1915) in 23S rRNA + S-adenosyl-L-methionine = N(3)-methylpseudouridine(1915) in 23S rRNA + S-adenosyl-L-homocysteine + H(+). Specifically methylates the pseudouridine at position 1915 (m3Psi1915) in 23S rRNA. The protein is Ribosomal RNA large subunit methyltransferase H of Bacillus velezensis (strain DSM 23117 / BGSC 10A6 / LMG 26770 / FZB42) (Bacillus amyloliquefaciens subsp. plantarum).